A 166-amino-acid polypeptide reads, in one-letter code: Deglycase PH1704 (166 aa).

The PfpI endopeptidase domain maps to 1-166; it reads MKVLFLTANE…WMREFVKLLK (166 aa). Cys100 acts as the Nucleophile in catalysis. His101 is an active-site residue.

This sequence belongs to the peptidase C56 family. As to quaternary structure, homohexamer formed by a dimer of trimers that assemble into a hollow ring structure.

It localises to the cytoplasm. The catalysed reaction is N(omega)-(1-hydroxy-2-oxopropyl)-L-arginyl-[protein] + H2O = lactate + L-arginyl-[protein] + H(+). It catalyses the reaction N(6)-(1-hydroxy-2-oxopropyl)-L-lysyl-[protein] + H2O = lactate + L-lysyl-[protein] + H(+). It carries out the reaction S-(1-hydroxy-2-oxopropyl)-L-cysteinyl-[protein] + H2O = lactate + L-cysteinyl-[protein] + H(+). The enzyme catalyses N(omega)-(1-hydroxy-2-oxoethyl)-L-arginyl-[protein] + H2O = L-arginyl-[protein] + glycolate + H(+). The catalysed reaction is N(6)-(1-hydroxy-2-oxoethyl)-L-lysyl-[protein] + H2O = glycolate + L-lysyl-[protein] + H(+). It catalyses the reaction S-(1-hydroxy-2-oxoethyl)-L-cysteinyl-[protein] + H2O = glycolate + L-cysteinyl-[protein] + H(+). In terms of biological role, deglycase that catalyzes the deglycation of the Maillard adducts formed between amino groups of proteins and reactive carbonyl groups of glyoxals. Thus, functions as a protein deglycase that repairs methylglyoxal- and glyoxal-glycated proteins, and releases repaired proteins and lactate or glycolate, respectively. Deglycates cysteine, arginine and lysine residues in proteins, and thus reactivates these proteins by reversing glycation by glyoxals. Acts on early glycation intermediates (hemithioacetals and aminocarbinols), preventing the formation of advanced glycation endproducts (AGE) that cause irreversible damage. Also displays proteolytic activity. In Pyrococcus horikoshii (strain ATCC 700860 / DSM 12428 / JCM 9974 / NBRC 100139 / OT-3), this protein is Deglycase PH1704.